The following is a 641-amino-acid chain: Putative phagocytic receptor 1a (641 aa).

A signal peptide spans 1–23 (MKINKKQIVFFILFSIFLNHVNG). Topologically, residues 24-279 (IFYLPGMIPH…ESNDNSVHWF (256 aa)) are extracellular. The helical transmembrane segment at 280 to 300 (SILNSLMIVFILTVMVAMIII) threads the bilayer. Residues 301-349 (RTLKKDIRRYTSIDTSEDRDSQEETGWKMIHGDVFRPPSHPMLLSVCIG) lie on the Cytoplasmic side of the membrane. The helical transmembrane segment at 350-370 (SGVQIFSMTLITMIFAVLGFL) threads the bilayer. Residues 371 to 374 (SPAN) are Extracellular-facing. The chain crosses the membrane as a helical span at residues 375-395 (IGGLATALIVLFVLSAMFAGY). Residues 396–413 (FSTRVFTIFKGRNWKKNT) lie on the Cytoplasmic side of the membrane. A helical transmembrane segment spans residues 414–434 (IYTALSMPGIIFGIFFFVNMF). Residues 435-445 (LRGAKSSAAVP) are Extracellular-facing. A helical transmembrane segment spans residues 446–466 (FGTFASIIAMWFGISVPLVFL). Over 467-502 (GSYFASKKPVPEDPVRTNQIPRQVPDQIWYMNPYLS) the chain is Cytoplasmic. A helical membrane pass occupies residues 503-523 (ILMGGILPFGAVFIELHFILT). Over 524–532 (SLWDNQFYY) the chain is Extracellular. The chain crosses the membrane as a helical span at residues 533-553 (IFGFLFIVLMILIVTSAEISI). The Cytoplasmic segment spans residues 554 to 578 (VMCYFQLCAEDHHWWWRSFLTAGSS). A helical membrane pass occupies residues 579–599 (SLYMFIYSVSFFRYLGITKFI). Residues 600 to 608 (SSLLDFSYS) lie on the Extracellular side of the membrane. A helical membrane pass occupies residues 609 to 629 (FIMSLAFAALTGTIGFYSCYF). Over 630 to 641 (LVRKIYSSIHIN) the chain is Cytoplasmic.

This sequence belongs to the nonaspanin (TM9SF) (TC 9.A.2) family.

The protein resides in the membrane. Its function is as follows. Involved in adhesion, phagocytosis of hydrophilic particles and intracellular killing of bacteria. Associates with proteins harboring glycine-rich transmembrane domains and ensures their efficient localization to the cell surface. The polypeptide is Putative phagocytic receptor 1a (phg1a) (Dictyostelium discoideum (Social amoeba)).